The sequence spans 189 residues: MIKETMRNNKLFGLWIYLMSDCIIFAVLFAVYAIISSNFSTNLINHKIFNLSYVFLETLILLLSSLSSGMLTIQKNKNNIKIIYFYLLLTFFLGLSFLLMEVNEFYKLILENCSPSQHAFFSIFFTIVGVHGIHVFFGLIFILSILYQLFYLGITNTIRIRILCFSLFWHFLDIIWICVFTFVYLNGVI.

Residues 1–10 (MIKETMRNNK) are Cytoplasmic-facing. A helical membrane pass occupies residues 11 to 31 (LFGLWIYLMSDCIIFAVLFAV). Residues 32 to 52 (YAIISSNFSTNLINHKIFNLS) are Extracellular-facing. The helical transmembrane segment at 53 to 73 (YVFLETLILLLSSLSSGMLTI) threads the bilayer. Residues 74–81 (QKNKNNIK) are Cytoplasmic-facing. The helical transmembrane segment at 82–102 (IIYFYLLLTFFLGLSFLLMEV) threads the bilayer. Residues 103–122 (NEFYKLILENCSPSQHAFFS) are Extracellular-facing. A helical membrane pass occupies residues 123-143 (IFFTIVGVHGIHVFFGLIFIL). Residues 144-161 (SILYQLFYLGITNTIRIR) lie on the Cytoplasmic side of the membrane. A helical transmembrane segment spans residues 162-182 (ILCFSLFWHFLDIIWICVFTF). The Extracellular portion of the chain corresponds to 183-189 (VYLNGVI).

The protein belongs to the cytochrome c oxidase subunit 3 family. Heterooctamer of two A chains, two B chains, two C chains and two D chains.

It localises to the cell membrane. Its function is as follows. Cytochrome bo(3) ubiquinol terminal oxidase is the component of the aerobic respiratory chain of E.coli that predominates when cells are grown at high aeration. Has proton pump activity across the membrane in addition to electron transfer, pumping 2 protons/electron. The protein is Cytochrome bo(3) ubiquinol oxidase subunit 3 (cyoC) of Buchnera aphidicola subsp. Schizaphis graminum (strain Sg).